The sequence spans 237 residues: UPF0758 protein Veis_1654 (237 aa).

One can recognise an MPN domain in the interval 115-237 (VFDTPDAVKH…ALSMAEMGLL (123 aa)). Zn(2+)-binding residues include histidine 186, histidine 188, and aspartate 199. The short motif at 186 to 199 (HNHPSGSVQPSRAD) is the JAMM motif element.

Belongs to the UPF0758 family.

In Verminephrobacter eiseniae (strain EF01-2), this protein is UPF0758 protein Veis_1654.